A 121-amino-acid polypeptide reads, in one-letter code: uncharacterized protein (121 aa).

It localises to the mitochondrion. This is an uncharacterized protein from Arabidopsis thaliana (Mouse-ear cress).